Consider the following 86-residue polypeptide: uncharacterized protein (86 aa).

This sequence to C.jejuni CJ0253.

This is an uncharacterized protein from Helicobacter pylori (strain J99 / ATCC 700824) (Campylobacter pylori J99).